Consider the following 137-residue polypeptide: Small ribosomal subunit protein uS12 (137 aa).

The disordered stretch occupies residues 1 to 57 (MPTINQLVRKPRKSKVKKSKSPALNVGYNSRKKVQTNVSSPQKRGVATRVGTMTPKK). Over residues 9–20 (RKPRKSKVKKSK) the composition is skewed to basic residues. Asp102 bears the 3-methylthioaspartic acid mark.

It belongs to the universal ribosomal protein uS12 family. As to quaternary structure, part of the 30S ribosomal subunit. Contacts proteins S8 and S17. May interact with IF1 in the 30S initiation complex.

Functionally, with S4 and S5 plays an important role in translational accuracy. Its function is as follows. Interacts with and stabilizes bases of the 16S rRNA that are involved in tRNA selection in the A site and with the mRNA backbone. Located at the interface of the 30S and 50S subunits, it traverses the body of the 30S subunit contacting proteins on the other side and probably holding the rRNA structure together. The combined cluster of proteins S8, S12 and S17 appears to hold together the shoulder and platform of the 30S subunit. The sequence is that of Small ribosomal subunit protein uS12 from Streptococcus suis (strain 05ZYH33).